The sequence spans 593 residues: Progranulin (593 aa).

The first 17 residues, 1–17, serve as a signal peptide directing secretion; the sequence is MWTLVSWVALTAGLVAG. Residue N118 is glycosylated (N-linked (GlcNAc...) asparagine). Cystine bridges form between C126/C139 and C133/C149. N236 and N265 each carry an N-linked (GlcNAc...) asparagine glycan. Disulfide bonds link C284-C296, C290-C306, C297-C314, C307-C321, C315-C328, C322-C335, C366-C378, C372-C388, C397-C410, and C404-C416. N-linked (GlcNAc...) asparagine glycosylation is present at N368. N530 carries N-linked (GlcNAc...) asparagine glycosylation.

This sequence belongs to the granulin family. Progranulin is secreted as a homodimer. Interacts with SLPI; interaction protects progranulin from proteolysis. Interacts (via region corresponding to granulin-7 peptide) with CTSD; stabilizes CTSD and increases its proteolytic activity. Interacts (via region corresponding to granulin-7 peptide) with SORT1; this interaction mediates endocytosis and lysosome delivery of progranulin; interaction occurs at the neuronal cell surface in a stressed nervous system. Interacts with PSAP; facilitates lysosomal delivery of progranulin from the extracellular space and the biosynthetic pathway. Forms a complex with PSAP and M6PR; PSAP bridges the binding between progranulin and M6PR. Forms a complex with PSAP and SORT1; progranulin bridges the interaction between PSAP and SORT1; facilitates lysosomal targeting of PSAP via SORT1; interaction enhances PSAP uptake in primary cortical neurons. Interacts (via regions corresponding to granulin-2 and granulin-7 peptides) with GBA1; this interaction prevents aggregation of GBA1-SCARB2 complex via interaction with HSPA1A upon stress. Interacts (via region corresponding to granulin-7 peptide) with HSPA1A; mediates recruitment of HSPA1A to GBA1 and prevents GBA1 aggregation in response to stress. In terms of processing, cleaved by ELANE; proteolysis is blocked by SLPI and is concentration- and time-dependent and induces CXCL8/IL-8 production; granulin-3 and granulin-4 are resistant to ELANE. Cleaved by CTSL in lysosome thus regulating the maturation and turnover of progranulin within the lysosome. In terms of tissue distribution, in myelogenous leukemic cell lines of promonocytic, promyelocytic, and proerythroid lineage, in fibroblasts, and very strongly in epithelial cell lines. Present in inflammatory cells and bone marrow. Highest levels in kidney.

The protein localises to the secreted. It is found in the lysosome. Secreted protein that acts as a key regulator of lysosomal function and as a growth factor involved in inflammation, wound healing and cell proliferation. Regulates protein trafficking to lysosomes, and also the activity of lysosomal enzymes. Also facilitates the acidification of lysosomes, causing degradation of mature CTSD by CTSB. In addition, functions as a wound-related growth factor that acts directly on dermal fibroblasts and endothelial cells to promote division, migration and the formation of capillary-like tubule structures. Also promotes epithelial cell proliferation by blocking TNF-mediated neutrophil activation preventing release of oxidants and proteases. Moreover, modulates inflammation in neurons by preserving neurons survival, axonal outgrowth and neuronal integrity. Its function is as follows. Promotes proliferation of the epithelial cell line A431 in culture. In terms of biological role, inhibits epithelial cell proliferation and induces epithelial cells to secrete IL-8. Functionally, stabilizes CTSD through interaction with CTSD leading to maintain its aspartic-type peptidase activity. This Homo sapiens (Human) protein is Progranulin.